Reading from the N-terminus, the 214-residue chain is 3-demethoxyubiquinol 3-hydroxylase (214 aa).

Residues E63, E93, H96, E145, E177, and H180 each contribute to the Fe cation site.

Belongs to the COQ7 family. It depends on Fe cation as a cofactor.

Its subcellular location is the cell membrane. It catalyses the reaction a 5-methoxy-2-methyl-3-(all-trans-polyprenyl)benzene-1,4-diol + AH2 + O2 = a 3-demethylubiquinol + A + H2O. It participates in cofactor biosynthesis; ubiquinone biosynthesis. In terms of biological role, catalyzes the hydroxylation of 2-nonaprenyl-3-methyl-6-methoxy-1,4-benzoquinol during ubiquinone biosynthesis. In Nitrosococcus oceani (strain ATCC 19707 / BCRC 17464 / JCM 30415 / NCIMB 11848 / C-107), this protein is 3-demethoxyubiquinol 3-hydroxylase.